A 288-amino-acid polypeptide reads, in one-letter code: 33 kDa chaperonin (288 aa).

2 cysteine pairs are disulfide-bonded: cysteine 236–cysteine 238 and cysteine 269–cysteine 272.

Belongs to the HSP33 family. In terms of processing, under oxidizing conditions two disulfide bonds are formed involving the reactive cysteines. Under reducing conditions zinc is bound to the reactive cysteines and the protein is inactive.

It is found in the cytoplasm. Redox regulated molecular chaperone. Protects both thermally unfolding and oxidatively damaged proteins from irreversible aggregation. Plays an important role in the bacterial defense system toward oxidative stress. The protein is 33 kDa chaperonin of Lactococcus lactis subsp. lactis (strain IL1403) (Streptococcus lactis).